A 285-amino-acid polypeptide reads, in one-letter code: 4-hydroxybenzoate octaprenyltransferase (285 aa).

Helical transmembrane passes span 17 to 37 (PVGIFLLLWPTLWALWIAGAG), 41 to 61 (PKVLLVFVAGVALMRSAGCVI), 92 to 112 (LLLFAGLCLVAFGLVLLLNPL), 135 to 155 (HWPQAYLGAAFGWAVPMAFAA), 158 to 178 (GTVPIAAWLLFIATVLWATVY), 216 to 236 (ALLLLLFWIGYREGLGFYYYL), and 263 to 283 (AFLNNNAFGAVIFGGIALHYL).

The protein belongs to the UbiA prenyltransferase family. It depends on Mg(2+) as a cofactor.

It is found in the cell inner membrane. The catalysed reaction is all-trans-octaprenyl diphosphate + 4-hydroxybenzoate = 4-hydroxy-3-(all-trans-octaprenyl)benzoate + diphosphate. The protein operates within cofactor biosynthesis; ubiquinone biosynthesis. Functionally, catalyzes the prenylation of para-hydroxybenzoate (PHB) with an all-trans polyprenyl group. Mediates the second step in the final reaction sequence of ubiquinone-8 (UQ-8) biosynthesis, which is the condensation of the polyisoprenoid side chain with PHB, generating the first membrane-bound Q intermediate 3-octaprenyl-4-hydroxybenzoate. In Nitrosococcus oceani (strain ATCC 19707 / BCRC 17464 / JCM 30415 / NCIMB 11848 / C-107), this protein is 4-hydroxybenzoate octaprenyltransferase.